The following is a 127-amino-acid chain: uncharacterized protein (127 aa).

A signal peptide spans 1 to 16 (MIKKIIFGIAILLSLS). Residue C17 is the site of N-palmitoyl cysteine attachment. C17 carries the S-diacylglycerol cysteine lipid modification. A coiled-coil region spans residues 56 to 101 (EVRKEIQEYRVEIVDINKKKRELYNSLSKEAQNFLAEQQKYKQKLS). The tract at residues 101-127 (SISKLPTEDDSPNNTANSKDNKDTDTK) is disordered.

It is found in the cell membrane. This is an uncharacterized protein from Rickettsia felis (strain ATCC VR-1525 / URRWXCal2) (Rickettsia azadi).